Reading from the N-terminus, the 189-residue chain is Peptidyl-tRNA hydrolase (189 aa).

TRNA is bound at residue Y14. The active-site Proton acceptor is H19. TRNA contacts are provided by F61, N63, and N109.

This sequence belongs to the PTH family. In terms of assembly, monomer.

The protein localises to the cytoplasm. The catalysed reaction is an N-acyl-L-alpha-aminoacyl-tRNA + H2O = an N-acyl-L-amino acid + a tRNA + H(+). Functionally, hydrolyzes ribosome-free peptidyl-tRNAs (with 1 or more amino acids incorporated), which drop off the ribosome during protein synthesis, or as a result of ribosome stalling. In terms of biological role, catalyzes the release of premature peptidyl moieties from peptidyl-tRNA molecules trapped in stalled 50S ribosomal subunits, and thus maintains levels of free tRNAs and 50S ribosomes. This chain is Peptidyl-tRNA hydrolase, found in Sulfurovum sp. (strain NBC37-1).